Reading from the N-terminus, the 468-residue chain is Mitochondrial adenyl nucleotide antiporter SLC25A23 (468 aa).

The tract at residues 1–149 (MRGSPGDAER…DHFLLHSLEN (149 aa)) is regulatory N-terminal domain. Over 1-188 (MRGSPGDAER…EKLTGMWWKQ (188 aa)) the chain is Mitochondrial intermembrane. The 36-residue stretch at 9 to 44 (ERRQRWGRLFEELDSNKDGRVDVHELRQGLARLGGG) folds into the EF-hand 1 domain. Asp22, Asn24, Asp26, Arg28, and Glu33 together coordinate Ca(2+). Positions 34-67 (LRQGLARLGGGNPDPGAQQGISSEGDADPDGGLD) are disordered. Over residues 58–67 (GDADPDGGLD) the composition is skewed to acidic residues. EF-hand domains lie at 77–112 (EREQRLLLMFHSLDRNQDGHIDVSEIQQSFRALGIS) and 113–148 (ISLEQAEKILHSMDRDGTMTIDWQEWRDHFLLHSLE). Residues Asp90, Asn92, Asp94, His96, and Glu101 each contribute to the Ca(2+) site. The interval 150-159 (VEDVLYFWKH) is linker region. The segment at 165 to 468 (IGECLTVPDE…MKQALGVTSR (304 aa)) is C-terminal transmembrane transporter domain. 3 Solcar repeats span residues 183–269 (GMWW…IKRA), 277–362 (LHVQ…LKNW), and 374–462 (PGIL…MKQA). Residues 189-206 (LVAGAVAGAVSRTGTAPL) traverse the membrane as a helical segment. The Mitochondrial matrix portion of the chain corresponds to 207 to 243 (DRLKVFMQVHASKTNRLNILGGLRSMVLEGGIRSLWR). A helical membrane pass occupies residues 244–263 (GNGINVLKIAPESAIKFMAY). Residues 264–286 (EQIKRAILGQQETLHVQERFVAG) lie on the Mitochondrial intermembrane side of the membrane. A helical transmembrane segment spans residues 287–300 (SLAGATAQTIIYPM). Topologically, residues 301-336 (EVLKTRLTLRRTGQYKGLLDCARRILEREGPRAFYR) are mitochondrial matrix. A helical transmembrane segment spans residues 337 to 356 (GYLPNVLGIIPYAGIDLAVY). The Mitochondrial intermembrane segment spans residues 357-379 (ETLKNWWLQQYSHDSADPGILVL). The helical transmembrane segment at 380-397 (LACGTISSTCGQIASYPL) threads the bilayer. Topologically, residues 398–436 (ALVRTRMQAQASIEGGPQLSMLGLLRHILSQEGMRGLYR) are mitochondrial matrix. The helical transmembrane segment at 437–456 (GIAPNFMKVIPAVSISYVVY) threads the bilayer. The Mitochondrial intermembrane portion of the chain corresponds to 457 to 468 (ENMKQALGVTSR).

The protein belongs to the mitochondrial carrier (TC 2.A.29) family. As to quaternary structure, interacts with MCU. Interacts with MICU1. Expressed at low levels in most tissues examined, with highest expression in brain, skeletal muscle and pancreas.

It is found in the mitochondrion inner membrane. It carries out the reaction Mg(2+)(out) + phosphate(in) + ATP(out) = Mg(2+)(in) + phosphate(out) + ATP(in). The enzyme catalyses ADP(out) + phosphate(in) + H(+)(out) = ADP(in) + phosphate(out) + H(+)(in). It catalyses the reaction AMP(out) + phosphate(in) = AMP(in) + phosphate(out). The catalysed reaction is phosphate(in) + ATP(out) + 2 H(+)(out) = phosphate(out) + ATP(in) + 2 H(+)(in). It carries out the reaction dADP(in) + ADP(out) = dADP(out) + ADP(in). The enzyme catalyses Mg(2+)(in) + ADP(out) + ATP(in) + H(+)(out) = Mg(2+)(out) + ADP(in) + ATP(out) + H(+)(in). It catalyses the reaction ADP(out) + diphosphate(in) = ADP(in) + diphosphate(out). The catalysed reaction is dAMP(in) + ADP(out) + H(+)(out) = dAMP(out) + ADP(in) + H(+)(in). It carries out the reaction 3'-AMP(in) + ADP(out) + H(+)(out) = 3'-AMP(out) + ADP(in) + H(+)(in). The enzyme catalyses dAMP(out) + phosphate(in) = dAMP(in) + phosphate(out). It catalyses the reaction 3'-AMP(out) + phosphate(in) = 3'-AMP(in) + phosphate(out). The catalysed reaction is dADP(out) + phosphate(in) + H(+)(out) = dADP(in) + phosphate(out) + H(+)(in). With respect to regulation, activated by an increase in cytosolic calcium levels that induce a conformational change of the N-terminal regulatory domain, uncapping the channel and allowing transport. Inhibited by bathophenanthroline, mersalyl, p-hydroxymercuribenzoate, bromcresol purple, tannic acid, pyridoxal 5'-phosphate and p-hydroxymercuribenzoate. Electroneutral antiporter that mediates the transport of adenine nucleotides through the inner mitochondrial membrane. Originally identified as an ATP-magnesium/inorganic phosphate antiporter, it also acts as a broad specificity adenyl nucleotide antiporter. By regulating the mitochondrial matrix adenine nucleotide pool could adapt to changing cellular energetic demands and indirectly regulate adenine nucleotide-dependent metabolic pathways. Also acts as a regulator of mitochondrial calcium uptake and can probably transport trace amounts of other divalent metal cations in complex with ATP. In vitro, a low activity is also observed with guanyl and pyrimidine nucleotides. This Homo sapiens (Human) protein is Mitochondrial adenyl nucleotide antiporter SLC25A23.